Here is a 152-residue protein sequence, read N- to C-terminus: MSTKKIILKSSDGHSFEVEEEAACQCQTIAHMSEDDCTDNGIPLPEVTGKILEMVIEYCNKHHVDAANPCSDEDLKKWDKEFMEKYQSTIFDLIMAANYLNIKSLLDLACQTVADMIKDNTVEHTRKFFNIENDYTHEEEEAVRRENQWGFE.

An interaction with the F-box domain of F-box proteins region spans residues 94–152; that stretch reads IMAANYLNIKSLLDLACQTVADMIKDNTVEHTRKFFNIENDYTHEEEEAVRRENQWGFE.

The protein belongs to the SKP1 family. Part of a SCF (SKP1-cullin-F-box) protein ligase complex. Interacts with CPR1/CPR30. As to expression, expressed in young seedlings, roots, leaves, floral stems, inflorescences, and siliques.

It localises to the nucleus. It functions in the pathway protein modification; protein ubiquitination. Its function is as follows. Involved in ubiquitination and subsequent proteasomal degradation of target proteins. Together with CUL1, RBX1 and a F-box protein, it forms a SCF E3 ubiquitin ligase complex. The functional specificity of this complex depends on the type of F-box protein. In the SCF complex, it serves as an adapter that links the F-box protein to CUL1. The sequence is that of SKP1-like protein 10 (ASK10) from Arabidopsis thaliana (Mouse-ear cress).